A 79-amino-acid chain; its full sequence is Sulfur carrier protein TusA (79 aa).

Residue Cys-17 is the Cysteine persulfide intermediate of the active site.

The protein belongs to the sulfur carrier protein TusA family.

The protein localises to the cytoplasm. In terms of biological role, sulfur carrier protein which probably makes part of a sulfur-relay system. This is Sulfur carrier protein TusA from Actinobacillus succinogenes (strain ATCC 55618 / DSM 22257 / CCUG 43843 / 130Z).